The primary structure comprises 97 residues: uncharacterized protein (97 aa).

The tract at residues 27-50 (IGESEDKTNSRGQPATMKEDEVED) is disordered.

This is an uncharacterized protein from Caldicellulosiruptor saccharolyticus (Caldocellum saccharolyticum).